A 1321-amino-acid polypeptide reads, in one-letter code: Bile salt export pump (1321 aa).

Over 1 to 62 the chain is Cytoplasmic; it reads MSDSVILRSI…FSSSTDIWLM (62 aa). The disordered stretch occupies residues 16–37; that stretch reads ENDGFESDKSYNNDKKSRLQDE. Basic and acidic residues predominate over residues 21 to 37; that stretch reads ESDKSYNNDKKSRLQDE. Residues 62–385 enclose the ABC transmembrane type-1 1 domain; the sequence is MFVGSLCAFL…ASPCLEAFAT (324 aa). The helical transmembrane segment at 63 to 83 threads the bilayer; sequence FVGSLCAFLHGIAQPGVLLIF. At 84 to 147 the chain is on the extracellular side; it reads GTMTDVFIDY…MIKFASYYAG (64 aa). Residues Asn109, Asn116, Asn122, and Asn125 are each glycosylated (N-linked (GlcNAc...) asparagine). Residues 148 to 168 traverse the membrane as a helical segment; it reads IAVAVLITGYIQICFWVIAAA. Residues 169–215 lie on the Cytoplasmic side of the membrane; the sequence is RQIQKMRKFYFRRIMRMEIGWFDCNSVGELNTRFSDDINKINDAIAD. Residues 216-236 form a helical membrane-spanning segment; it reads QMALFIQRMTSTICGFLLGFF. Residues 237-240 lie on the Extracellular side of the membrane; it reads RGWK. The chain crosses the membrane as a helical span at residues 241 to 261; it reads LTLVIISVSPLIGIGAATIGL. The Cytoplasmic segment spans residues 262–319; the sequence is SVSKFTDYELKAYAKAGVVADEVISSMRTVAAFGGEKREVERYEKNLVFAQRWGIRKG. Residues 320 to 340 traverse the membrane as a helical segment; the sequence is IVMGFFTGFVWCLIFLCYALA. Residues 341 to 353 lie on the Extracellular side of the membrane; the sequence is FWYGSTLVLDEGE. The chain crosses the membrane as a helical span at residues 354–374; that stretch reads YTPGTLVQIFLSVIVGALNLG. The Cytoplasmic portion of the chain corresponds to 375 to 755; sequence NASPCLEAFA…KFSAPEWPYM (381 aa). The 237-residue stretch at 420–656 folds into the ABC transporter 1 domain; sequence IEFHNVTFHY…KGVYFTLVTL (237 aa). Residue 455 to 462 participates in ATP binding; sequence GPSGAGKS. A Phosphothreonine modification is found at Thr586. The residue at position 587 (Ser587) is a Phosphoserine. The segment at 651–672 is interaction with HAX1; that stretch reads FTLVTLQSQGNQALNEEDIKDA. Phosphoserine is present on residues Ser690, Ser701, and Ser704. The ABC transmembrane type-1 2 domain occupies 755-1043; sequence MLVGSVGAAV…AFSYTPSYAK (289 aa). The chain crosses the membrane as a helical span at residues 756–776; sequence LVGSVGAAVNGTVTPLYAFLF. Topologically, residues 777–794 are extracellular; the sequence is SQILGTFSIPDKEEQRSQ. Residues 795–815 form a helical membrane-spanning segment; it reads INGVCLLFVAMGCVSLFTQFL. Residues 816 to 869 lie on the Cytoplasmic side of the membrane; that stretch reads QGYAFAKSGELLTKRLRKFGFRAMLGQDIAWFDDLRNSPGALTTRLATDASQVQ. Helical transmembrane passes span 870–890 and 891–911; these read GAAG…TVAM and IIAF…FPFL. Topologically, residues 912–979 are cytoplasmic; that stretch reads ALSGATQTRM…PFKTAIQKAN (68 aa). The chain crosses the membrane as a helical span at residues 980 to 1000; it reads IYGFCFAFAQCIMFIANSASY. Over 1001–1011 the chain is Extracellular; it reads RYGGYLISNEG. A helical transmembrane segment spans residues 1012–1032; that stretch reads LHFSYVFRVISAVVLSATALG. Topologically, residues 1033 to 1321 are cytoplasmic; the sequence is RAFSYTPSYA…KLVTTGSPIS (289 aa). Residues 1078–1316 form the ABC transporter 2 domain; it reads IDFVDCKFTY…KGAYYKLVTT (239 aa). Position 1113–1120 (1113–1120) interacts with ATP; it reads GSSGCGKS. Ser1214 is modified (phosphoserine). The interval 1311–1314 is mediates internalization from the plasma membrane; sequence YKLV. Ser1321 is modified (phosphoserine).

The protein belongs to the ABC transporter superfamily. ABCB family. Multidrug resistance exporter (TC 3.A.1.201) subfamily. In terms of assembly, interacts with HAX1. Interacts with the adapter protein complex 2 (AP-2) throught AP2A2 or AP2A1; this interaction regulates cell membrane expression of ABCB11 through its internalization in a clathrin-dependent manner and its subsequent degradation. In terms of processing, N-glycosylated. Ubiquitinated; short-chain ubiquitination regulates cell-Surface expression of ABCB11. As to expression, expressed predominantly, if not exclusively in the liver, where it was further localized to the canalicular microvilli and to subcanalicular vesicles of the hepatocytes by in situ.

Its subcellular location is the apical cell membrane. It is found in the recycling endosome membrane. The protein localises to the endosome. It localises to the cell membrane. It carries out the reaction cholate(in) + ATP + H2O = cholate(out) + ADP + phosphate + H(+). It catalyses the reaction taurocholate(in) + ATP + H2O = taurocholate(out) + ADP + phosphate + H(+). The catalysed reaction is glycocholate(in) + ATP + H2O = glycocholate(out) + ADP + phosphate + H(+). The enzyme catalyses glycochenodeoxycholate(in) + ATP + H2O = glycochenodeoxycholate(out) + ADP + phosphate + H(+). It carries out the reaction taurochenodeoxycholate(in) + ATP + H2O = taurochenodeoxycholate(out) + ADP + phosphate + H(+). It catalyses the reaction glycoursodeoxycholate(in) + ATP + H2O = glycoursodeoxycholate(out) + ADP + phosphate + H(+). The catalysed reaction is tauroursodeoxycholate(in) + ATP + H2O = tauroursodeoxycholate(out) + ADP + phosphate + H(+). The enzyme catalyses taurodeoxycholate(in) + ATP + H2O = taurodeoxycholate(out) + ADP + phosphate + H(+). It carries out the reaction taurolithocholate 3-sulfate(in) + ATP + H2O = taurolithocholate 3-sulfate(out) + ADP + phosphate + H(+). It catalyses the reaction pravastatin(in) + ATP + H2O = pravastatin(out) + ADP + phosphate + H(+). Its activity is regulated as follows. The uptake of taurocholate is inhibited by taurolithocholate sulfate with an IC(50) of 9 uM. Pravastatin competitively inhibits the transport of taurocholic acid. Cyclosporin A, glibenclamide, rifampicin and troglitazonestrongly competitively inhibit the transport activity of taurocholate. The canalicular transport activity of taurocholate is strongly dependent on canalicular membrane cholesterol content. The uptake of taurocholate is increased by short- and medium-chain fatty acids. Cholesterol increases transport capacity of taurocholate without affecting the affinity for the substrate. Its function is as follows. Catalyzes the transport of the major hydrophobic bile salts, such as taurine and glycine-conjugated cholic acid across the canalicular membrane of hepatocytes in an ATP-dependent manner, therefore participates in hepatic bile acid homeostasis and consequently to lipid homeostasis through regulation of biliary lipid secretion in a bile salts dependent manner. Transports taurine-conjugated bile salts more rapidly than glycine-conjugated bile salts. Also transports non-bile acid compounds, such as pravastatin and fexofenadine in an ATP-dependent manner and may be involved in their biliary excretion. In Homo sapiens (Human), this protein is Bile salt export pump.